The primary structure comprises 251 residues: Small ribosomal subunit protein uS2 (251 aa).

The protein belongs to the universal ribosomal protein uS2 family.

This is Small ribosomal subunit protein uS2 from Synechococcus sp. (strain ATCC 27144 / PCC 6301 / SAUG 1402/1) (Anacystis nidulans).